Reading from the N-terminus, the 363-residue chain is Phosphoserine aminotransferase (363 aa).

An L-glutamate-binding site is contributed by Arg-42. Residues 76–77 (GR), Trp-102, Thr-156, Asp-175, and Gln-198 contribute to the pyridoxal 5'-phosphate site. Residue Lys-199 is modified to N6-(pyridoxal phosphate)lysine. 240–241 (NT) contributes to the pyridoxal 5'-phosphate binding site.

It belongs to the class-V pyridoxal-phosphate-dependent aminotransferase family. SerC subfamily. In terms of assembly, homodimer. Pyridoxal 5'-phosphate is required as a cofactor.

It localises to the cytoplasm. It carries out the reaction O-phospho-L-serine + 2-oxoglutarate = 3-phosphooxypyruvate + L-glutamate. The enzyme catalyses 4-(phosphooxy)-L-threonine + 2-oxoglutarate = (R)-3-hydroxy-2-oxo-4-phosphooxybutanoate + L-glutamate. Its pathway is amino-acid biosynthesis; L-serine biosynthesis; L-serine from 3-phospho-D-glycerate: step 2/3. The protein operates within cofactor biosynthesis; pyridoxine 5'-phosphate biosynthesis; pyridoxine 5'-phosphate from D-erythrose 4-phosphate: step 3/5. In terms of biological role, catalyzes the reversible conversion of 3-phosphohydroxypyruvate to phosphoserine and of 3-hydroxy-2-oxo-4-phosphonooxybutanoate to phosphohydroxythreonine. This chain is Phosphoserine aminotransferase, found in Shewanella denitrificans (strain OS217 / ATCC BAA-1090 / DSM 15013).